The primary structure comprises 463 residues: Argininosuccinate lyase (463 aa).

It belongs to the lyase 1 family. Argininosuccinate lyase subfamily.

Its subcellular location is the cytoplasm. The enzyme catalyses 2-(N(omega)-L-arginino)succinate = fumarate + L-arginine. It functions in the pathway amino-acid biosynthesis; L-arginine biosynthesis; L-arginine from L-ornithine and carbamoyl phosphate: step 3/3. In Streptococcus pneumoniae (strain 70585), this protein is Argininosuccinate lyase.